Here is a 296-residue protein sequence, read N- to C-terminus: ATP synthase gamma chain (296 aa).

The protein belongs to the ATPase gamma chain family. F-type ATPases have 2 components, CF(1) - the catalytic core - and CF(0) - the membrane proton channel. CF(1) has five subunits: alpha(3), beta(3), gamma(1), delta(1), epsilon(1). CF(0) has three main subunits: a, b and c.

It is found in the cell inner membrane. Produces ATP from ADP in the presence of a proton gradient across the membrane. The gamma chain is believed to be important in regulating ATPase activity and the flow of protons through the CF(0) complex. This Methylorubrum extorquens (strain PA1) (Methylobacterium extorquens) protein is ATP synthase gamma chain.